Here is a 309-residue protein sequence, read N- to C-terminus: Aromatic prenyltransferase (309 aa).

It belongs to the aromatic prenyltransferase family.

Functionally, prenyltransferase that attaches isoprenoid moieties to carbon atoms of aromatic substrates in an enzyme-catalyzed Friedel-Crafts reaction. Shows specificity for dimethylallyl diphosphate (DMAPP) and does not accept geranyl diphosphate (GPP) or isopentenyl diphosphate (IPP). Prenylates the artificial substrate 2,7-dihydroxynaphthalene (2,7-DHN), as well as dihydrophenazine-1-carboxylic acid and 4-hydroxybenzoic acid at lower levels. Only traces of products are detected with aspulvinone E or flaviolin as substrates; and no product is formed with L-tryptophan, L-tyrosine, or 4-hydroxyphenylpyruvate. Ptf seems no to be involved in the prenylation reaction in the biosynthesis of aspulvinone H and J and the physiological function of ptf remains unknown. The polypeptide is Aromatic prenyltransferase (Sclerotinia sclerotiorum (strain ATCC 18683 / 1980 / Ss-1) (White mold)).